Reading from the N-terminus, the 686-residue chain is Translation initiation factor IF-2 (686 aa).

Residues 54–105 (KPSVADEFEVEEKVVRSKKNSNKKKKKGKGNEDKRQENFAGRQQTQTVETPD) form a disordered region. Residues 69–81 (RSKKNSNKKKKKG) show a composition bias toward basic residues. The 170-residue stretch at 188-357 (ERPAVVTIMG…LLVSEVEEYK (170 aa)) folds into the tr-type G domain. A G1 region spans residues 197-204 (GHVDHGKT). A GTP-binding site is contributed by 197–204 (GHVDHGKT). The G2 stretch occupies residues 222-226 (GITQH). Residues 243–246 (DTPG) are G3. GTP is bound by residues 243-247 (DTPGH) and 297-300 (NKMD). The segment at 297 to 300 (NKMD) is G4. The interval 333-335 (SAI) is G5.

It belongs to the TRAFAC class translation factor GTPase superfamily. Classic translation factor GTPase family. IF-2 subfamily.

The protein localises to the cytoplasm. Functionally, one of the essential components for the initiation of protein synthesis. Protects formylmethionyl-tRNA from spontaneous hydrolysis and promotes its binding to the 30S ribosomal subunits. Also involved in the hydrolysis of GTP during the formation of the 70S ribosomal complex. The sequence is that of Translation initiation factor IF-2 from Bacillus cereus (strain 03BB102).